Consider the following 86-residue polypeptide: Cell division topological specificity factor (86 aa).

This sequence belongs to the MinE family.

In terms of biological role, prevents the cell division inhibition by proteins MinC and MinD at internal division sites while permitting inhibition at polar sites. This ensures cell division at the proper site by restricting the formation of a division septum at the midpoint of the long axis of the cell. This chain is Cell division topological specificity factor, found in Shewanella woodyi (strain ATCC 51908 / MS32).